The following is a 307-amino-acid chain: Transmembrane and coiled-coil domain-containing protein 5B (307 aa).

Residues 20–212 are a coiled coil; it reads TLEAIKQNLK…SKAQNDSSQV (193 aa). The chain crosses the membrane as a helical span at residues 246-268; sequence YLFFMVMIVIRLLGYVFFHLQYV.

Belongs to the TMCO5 family.

It is found in the membrane. The chain is Transmembrane and coiled-coil domain-containing protein 5B (Tmco5b) from Mus musculus (Mouse).